Here is a 216-residue protein sequence, read N- to C-terminus: Adenylate kinase (216 aa).

Residue 10–15 (GAGKGT) coordinates ATP. The segment at 30–59 (STGDMLRAAVGVGTEVGKRAKAVMDAGKLV) is NMP. Residues threonine 31, arginine 36, 57 to 59 (KLV), 85 to 88 (GFPR), and glutamine 92 contribute to the AMP site. Positions 126 to 163 (GRYTCAQCGTVYHDTDKVPVEEGVCDKCGSTHFKRRPD) are LID. Position 127 (arginine 127) interacts with ATP. Cysteine 130 and cysteine 133 together coordinate Zn(2+). Residue 136–137 (VY) participates in ATP binding. Cysteine 150 and cysteine 153 together coordinate Zn(2+). Residues arginine 160 and arginine 172 each coordinate AMP. Alanine 200 lines the ATP pocket.

The protein belongs to the adenylate kinase family. Monomer.

Its subcellular location is the cytoplasm. The enzyme catalyses AMP + ATP = 2 ADP. It functions in the pathway purine metabolism; AMP biosynthesis via salvage pathway; AMP from ADP: step 1/1. In terms of biological role, catalyzes the reversible transfer of the terminal phosphate group between ATP and AMP. Plays an important role in cellular energy homeostasis and in adenine nucleotide metabolism. In Rhizobium etli (strain CIAT 652), this protein is Adenylate kinase.